The chain runs to 1087 residues: Error-prone DNA polymerase 3 (1087 aa).

The interval 1040–1064 (AGRGDEFAHGSPGSSDTRDKSKPVV) is disordered.

It belongs to the DNA polymerase type-C family. DnaE2 subfamily.

The protein localises to the cytoplasm. The enzyme catalyses DNA(n) + a 2'-deoxyribonucleoside 5'-triphosphate = DNA(n+1) + diphosphate. DNA polymerase involved in damage-induced mutagenesis and translesion synthesis (TLS). It is not the major replicative DNA polymerase. The protein is Error-prone DNA polymerase 3 of Agrobacterium fabrum (strain C58 / ATCC 33970) (Agrobacterium tumefaciens (strain C58)).